Consider the following 181-residue polypeptide: Small ribosomal subunit protein bS16 (181 aa).

The disordered stretch occupies residues 150-181 (KKAAEEAAKAAAEAPAEEAAPAEEAATEAAAE). Low complexity predominate over residues 158–181 (KAAAEAPAEEAAPAEEAATEAAAE).

The protein belongs to the bacterial ribosomal protein bS16 family.

The sequence is that of Small ribosomal subunit protein bS16 from Bacteroides fragilis (strain ATCC 25285 / DSM 2151 / CCUG 4856 / JCM 11019 / LMG 10263 / NCTC 9343 / Onslow / VPI 2553 / EN-2).